The primary structure comprises 370 residues: Phospho-N-acetylmuramoyl-pentapeptide-transferase (370 aa).

Helical transmembrane passes span 3-23 (QIIIAGAVSFLVAIFTTPVLI), 54-74 (GLAILAGILVAYVVAGLYGLL), 79-99 (AFTASGLLVLGLTLGLGAVGF), 118-138 (AKLISQLVLALLFGFLVLRFP), 161-181 (LAVGGTVIGTIVFLIFMYILI), 197-217 (LAAGVTAIVMGSYSLMTFWQF), 238-258 (LAVLAAAGLGGCLGFLWWNAA), 262-282 (IFMGDTGSLALGGLVAGISVT), 290-310 (IIIGALFVIETVSVVIQIVVF), and 341-361 (FWLLAAMAAMAGVAIFYGDWL).

It belongs to the glycosyltransferase 4 family. MraY subfamily. Mg(2+) serves as cofactor.

It localises to the cell membrane. It catalyses the reaction UDP-N-acetyl-alpha-D-muramoyl-L-alanyl-gamma-D-glutamyl-meso-2,6-diaminopimeloyl-D-alanyl-D-alanine + di-trans,octa-cis-undecaprenyl phosphate = di-trans,octa-cis-undecaprenyl diphospho-N-acetyl-alpha-D-muramoyl-L-alanyl-D-glutamyl-meso-2,6-diaminopimeloyl-D-alanyl-D-alanine + UMP. It participates in cell wall biogenesis; peptidoglycan biosynthesis. In terms of biological role, catalyzes the initial step of the lipid cycle reactions in the biosynthesis of the cell wall peptidoglycan: transfers peptidoglycan precursor phospho-MurNAc-pentapeptide from UDP-MurNAc-pentapeptide onto the lipid carrier undecaprenyl phosphate, yielding undecaprenyl-pyrophosphoryl-MurNAc-pentapeptide, known as lipid I. In Corynebacterium aurimucosum (strain ATCC 700975 / DSM 44827 / CIP 107346 / CN-1) (Corynebacterium nigricans), this protein is Phospho-N-acetylmuramoyl-pentapeptide-transferase.